The sequence spans 112 residues: C-type natriuretic peptide 3 (112 aa).

The first 19 residues, 1 to 19 (MSLRAFMLCVCLLLQSVGA), serve as a signal peptide directing secretion. The propeptide occupies 20–90 (RPASELQNLE…SKRSWGRYKK (71 aa)). The tract at residues 33 to 67 (QDQLSSTEHPEEDRLDRTREEPQLGGSSSREAADE) is disordered. Residues 40 to 54 (EHPEEDRLDRTREEP) show a composition bias toward basic and acidic residues. A disulfide bridge connects residues Cys96 and Cys112.

Belongs to the natriuretic peptide family. In terms of tissue distribution, spinal cord, kidney, ovary, heart and spleen, and to a lower extent in brain and liver.

The protein resides in the secreted. Its function is as follows. Exhibits natriuretic and vasodepressant activity. Has cGMP-stimulating activity. May help to regulate body fluid homeostasis in a variety of aquatic environments. In Oryzias latipes (Japanese rice fish), this protein is C-type natriuretic peptide 3.